The chain runs to 93 residues: Ribonuclease P protein component 1 (93 aa).

It belongs to the eukaryotic/archaeal RNase P protein component 1 family. Consists of a catalytic RNA component and at least 4-5 protein subunits.

Its subcellular location is the cytoplasm. It catalyses the reaction Endonucleolytic cleavage of RNA, removing 5'-extranucleotides from tRNA precursor.. In terms of biological role, part of ribonuclease P, a protein complex that generates mature tRNA molecules by cleaving their 5'-ends. In Methanothermobacter thermautotrophicus (strain ATCC 29096 / DSM 1053 / JCM 10044 / NBRC 100330 / Delta H) (Methanobacterium thermoautotrophicum), this protein is Ribonuclease P protein component 1.